The primary structure comprises 149 residues: Histone H3-like 1 (149 aa).

Positions 1–19 (MARPRKEAPQRNLDRDENA) are enriched in basic and acidic residues. Positions 1 to 58 (MARPRKEAPQRNLDRDENARQQPTEEPQDEAPRNQGRQQQQQRPPAAPRRPRRFRPGT) are disordered. The segment covering 33-44 (RNQGRQQQQQRP) has biased composition (low complexity).

The protein belongs to the histone H3 family. In terms of assembly, the nucleosome is a histone octamer containing two molecules each of H2A, H2B, H3 and H4 assembled in one H3-H4 heterotetramer and two H2A-H2B heterodimers. The octamer wraps approximately 147 bp of DNA. Pollen specific.

It localises to the nucleus. It is found in the chromosome. Core component of nucleosome. Nucleosomes wrap and compact DNA into chromatin, limiting DNA accessibility to the cellular machineries which require DNA as a template. Histones thereby play a central role in transcription regulation, DNA repair, DNA replication and chromosomal stability. DNA accessibility is regulated via a complex set of post-translational modifications of histones, also called histone code, and nucleosome remodeling. This Lilium longiflorum (Trumpet lily) protein is Histone H3-like 1 (gH3).